The chain runs to 553 residues: Phosphoenolpyruvate carboxykinase (ATP) (553 aa).

Residues 1 to 22 (MAPPTAVGSSINFEGHPTIKST) form a disordered region. 255–262 (GLSGTGKT) is an ATP binding site.

Belongs to the phosphoenolpyruvate carboxykinase (ATP) family.

The enzyme catalyses oxaloacetate + ATP = phosphoenolpyruvate + ADP + CO2. Its pathway is carbohydrate biosynthesis; gluconeogenesis. In Candida albicans (Yeast), this protein is Phosphoenolpyruvate carboxykinase (ATP) (PCK1).